Here is an 820-residue protein sequence, read N- to C-terminus: Leucine--tRNA ligase (820 aa).

The short motif at 42–52 (PYPSGDLHMGH) is the 'HIGH' region element. The 'KMSKS' region signature appears at 576 to 580 (KMSKS). Lys-579 contacts ATP.

The protein belongs to the class-I aminoacyl-tRNA synthetase family.

It is found in the cytoplasm. It carries out the reaction tRNA(Leu) + L-leucine + ATP = L-leucyl-tRNA(Leu) + AMP + diphosphate. This Coxiella burnetii (strain RSA 331 / Henzerling II) protein is Leucine--tRNA ligase.